We begin with the raw amino-acid sequence, 492 residues long: Trk system potassium uptake protein TrkI (492 aa).

10 helical membrane passes run 20–40 (VLAV…LVLI), 47–67 (ALAF…SWIV), 81–101 (FVLT…PLVL), 143–163 (IMQW…LPFL), 196–216 (IYCG…MSPL), 246–266 (QLLW…VLYI), 282–302 (VQGL…WRVS), 334–354 (AWGA…GCSG), 403–423 (VVAF…GLSL), and 465–485 (WLLC…LVLL).

The protein belongs to the TrkH potassium transport family.

It is found in the cell inner membrane. Medium-affinity potassium transport system. Probably interacts with Trk system potassium uptake protein TrkA. Main K(+) transporter in osmotically adapted cells. The protein is Trk system potassium uptake protein TrkI (trkI) of Halomonas elongata (strain ATCC 33173 / DSM 2581 / NBRC 15536 / NCIMB 2198 / 1H9).